The primary structure comprises 150 residues: MQVILLENIQKLGNLGDIINVKAGYTRNFLIPKGKAKLATKTNLVEFELIRAKLQIAEAKTLKNAKAIETKMTNTICIIQANASEEGKLFGSINTTDIQTSLIKSGFKIEKRNIDIPETIRHTGEYKININLHTNITVSVKIVIEALQKV.

This sequence belongs to the bacterial ribosomal protein bL9 family.

In terms of biological role, binds to the 23S rRNA. The chain is Large ribosomal subunit protein bL9 from Vesicomyosocius okutanii subsp. Calyptogena okutanii (strain HA).